We begin with the raw amino-acid sequence, 835 residues long: Translation initiation factor IF-2 (835 aa).

The segment at 1-243 (MSDTDGKKTL…RARQKAMGGA (243 aa)) is disordered. A compositionally biased stretch (low complexity) spans 43–67 (VPKPGAGKPSAGGSSPAGDPSRRPA). Basic and acidic residues-rich tracts occupy residues 85–147 (KARE…EAKR), 157–166 (EAPKAERSAE), and 175–205 (EGGDNARRTTDRDREREQRQTRGKGRQDGRR). One can recognise a tr-type G domain in the interval 332–500 (PRPPVITIMG…AIALQAEILE (169 aa)). The tract at residues 341 to 348 (GHVDHGKT) is G1. A GTP-binding site is contributed by 341–348 (GHVDHGKT). The tract at residues 366–370 (GITQH) is G2. The G3 stretch occupies residues 388–391 (DTPG). Residues 388-392 (DTPGH) and 442-445 (NKID) each bind GTP. Residues 442-445 (NKID) are G4. Residues 478–480 (SAK) form a G5 region.

Belongs to the TRAFAC class translation factor GTPase superfamily. Classic translation factor GTPase family. IF-2 subfamily.

The protein resides in the cytoplasm. Functionally, one of the essential components for the initiation of protein synthesis. Protects formylmethionyl-tRNA from spontaneous hydrolysis and promotes its binding to the 30S ribosomal subunits. Also involved in the hydrolysis of GTP during the formation of the 70S ribosomal complex. The chain is Translation initiation factor IF-2 from Ruegeria pomeroyi (strain ATCC 700808 / DSM 15171 / DSS-3) (Silicibacter pomeroyi).